The chain runs to 706 residues: Choline transporter-like protein 2 (706 aa).

Residues 1–33 (MGKEQQLYYGKHGTPQKYDPAFRGPIYNRGCTD) are Cytoplasmic-facing. Threonine 14 is subject to Phosphothreonine. A helical membrane pass occupies residues 34–54 (IICCVFLFLAIVGYVAVGIIA). Topologically, residues 55 to 232 (WTHGDPRKVI…RIFEDYTVSW (178 aa)) are extracellular. N-linked (GlcNAc...) asparagine glycosylation is found at asparagine 187 and asparagine 200. Residues 233–253 (YWIIIGLIIAMVLSLLFIILL) form a helical membrane-spanning segment. Residues 254–256 (RFL) are Cytoplasmic-facing. Residues 257 to 277 (AGIMVWVMIVMVILVLGYGIL) traverse the membrane as a helical segment. Residues 278 to 315 (HCYMEYARLRGEAGSDVSLVDLGFQTDFRVYLHLRQTW) are Extracellular-facing. Residues 316-336 (VAFMIILSIVEVIIILLLIFL) form a helical membrane-spanning segment. The Cytoplasmic portion of the chain corresponds to 337–364 (RKRILIAIALIKEASRAVGYVMCSLLYP). Residues 365–385 (LVTFFLLCLCIAYWASTAIFL) traverse the membrane as a helical segment. Residues 386 to 457 (STSNEAVYKI…FNVFMFFWLA (72 aa)) lie on the Extracellular side of the membrane. N-linked (GlcNAc...) asparagine glycans are attached at residues asparagine 397 and asparagine 417. The helical transmembrane segment at 458–480 (NFVLALGQVTLAGAFASYYWAMN) threads the bilayer. Residues 481-504 (KPDDLPAFPLFSAFGRALRYHTGS) lie on the Cytoplasmic side of the membrane. Residues 505-525 (LAFGSLLLAIVQVIRVILEYL) form a helical membrane-spanning segment. The Extracellular portion of the chain corresponds to 526-563 (DQRLKAAENKFAKFLMSCLKCCFWCLEKFIKFLNRNAY). The helical transmembrane segment at 564–584 (IMIAIYGTNFCTSARNAFFLL) threads the bilayer. Residues 585–599 (MRNIIRVAVLDKVTD) lie on the Cytoplasmic side of the membrane. Residues 600-620 (FLFLLGKLLIVGSVGILAFFF) traverse the membrane as a helical segment. The Extracellular segment spans residues 621–638 (FTHRIRIVQDTAPSLNYY). The helical transmembrane segment at 639–659 (WVPVVTVVIGSYLIAHGFFSV) threads the bilayer. The Cytoplasmic segment spans residues 660-706 (YGMCVDTLFLCFLEDLERNDGTPERPYFMSLTLKKILNKTNKRQAEA).

This sequence belongs to the CTL (choline transporter-like) family. Interacts with COCH. In terms of processing, N-glycosylated.

Its subcellular location is the cell membrane. The protein localises to the mitochondrion outer membrane. It catalyses the reaction choline(out) + n H(+)(in) = choline(in) + n H(+)(out). The enzyme catalyses ethanolamine(out) + n H(+)(in) = ethanolamine(in) + n H(+)(out). Its function is as follows. Choline/H+ antiporter, mainly in mitochodria. Also acts as a low-affinity ethanolamine/H+ antiporter, regulating the supply of extracellular ethanolamine (Etn) for the CDP-Etn pathway, redistribute intracellular Etn and balance the CDP-Cho and CDP-Etn arms of the Kennedy pathway. This Bos taurus (Bovine) protein is Choline transporter-like protein 2 (SLC44A2).